The chain runs to 480 residues: Cytochrome b-c1 complex subunit 1, mitochondrial (480 aa).

A mitochondrion-targeting transit peptide spans Met1 to Gly34. N6-acetyllysine is present on residues Lys111 and Lys138. An N6-acetyllysine; alternate modification is found at Lys163. Lys163 bears the N6-succinyllysine; alternate mark. Ser212 is subject to Phosphoserine. Residue Lys248 is modified to N6-acetyllysine.

Belongs to the peptidase M16 family. UQCRC1/QCR1 subfamily. As to quaternary structure, component of the ubiquinol-cytochrome c oxidoreductase (cytochrome b-c1 complex, complex III, CIII), a multisubunit enzyme composed of 11 subunits. The complex is composed of 3 respiratory subunits cytochrome b, cytochrome c1 and Rieske protein UQCRFS1, 2 core protein subunits UQCRC1/QCR1 and UQCRC2/QCR2, and 6 low-molecular weight protein subunits UQCRH/QCR6, UQCRB/QCR7, UQCRQ/QCR8, UQCR10/QCR9, UQCR11/QCR10 and subunit 9, the cleavage product of Rieske protein UQCRFS1. The complex exists as an obligatory dimer and forms supercomplexes (SCs) in the inner mitochondrial membrane with NADH-ubiquinone oxidoreductase (complex I, CI) and cytochrome c oxidase (complex IV, CIV), resulting in different assemblies (supercomplex SCI(1)III(2)IV(1) and megacomplex MCI(2)III(2)IV(2)). Interacts with UQCC6. Interacts with STMP1.

It is found in the mitochondrion inner membrane. In terms of biological role, component of the ubiquinol-cytochrome c oxidoreductase, a multisubunit transmembrane complex that is part of the mitochondrial electron transport chain which drives oxidative phosphorylation. The respiratory chain contains 3 multisubunit complexes succinate dehydrogenase (complex II, CII), ubiquinol-cytochrome c oxidoreductase (cytochrome b-c1 complex, complex III, CIII) and cytochrome c oxidase (complex IV, CIV), that cooperate to transfer electrons derived from NADH and succinate to molecular oxygen, creating an electrochemical gradient over the inner membrane that drives transmembrane transport and the ATP synthase. The cytochrome b-c1 complex catalyzes electron transfer from ubiquinol to cytochrome c, linking this redox reaction to translocation of protons across the mitochondrial inner membrane, with protons being carried across the membrane as hydrogens on the quinol. In the process called Q cycle, 2 protons are consumed from the matrix, 4 protons are released into the intermembrane space and 2 electrons are passed to cytochrome c. The 2 core subunits UQCRC1/QCR1 and UQCRC2/QCR2 are homologous to the 2 mitochondrial-processing peptidase (MPP) subunits beta-MPP and alpha-MPP respectively, and they seem to have preserved their MPP processing properties. May be involved in the in situ processing of UQCRFS1 into the mature Rieske protein and its mitochondrial targeting sequence (MTS)/subunit 9 when incorporated into complex III. Seems to play an important role in the maintenance of proper mitochondrial function in nigral dopaminergic neurons. This chain is Cytochrome b-c1 complex subunit 1, mitochondrial (UQCRC1), found in Bos taurus (Bovine).